The following is a 148-amino-acid chain: Large ribosomal subunit protein bL9 (148 aa).

It belongs to the bacterial ribosomal protein bL9 family.

In terms of biological role, binds to the 23S rRNA. The protein is Large ribosomal subunit protein bL9 of Clostridium perfringens (strain ATCC 13124 / DSM 756 / JCM 1290 / NCIMB 6125 / NCTC 8237 / Type A).